Reading from the N-terminus, the 513-residue chain is GMP synthase [glutamine-hydrolyzing] (513 aa).

A Glutamine amidotransferase type-1 domain is found at 9–198 (LILVLDFGSQ…VRRVCECKGQ (190 aa)). Cys-86 serves as the catalytic Nucleophile. Residues His-172 and Glu-174 contribute to the active site. Residues 199-388 (WTMENFIEIE…LGIPEHLVWR (190 aa)) form the GMPS ATP-PPase domain. 226–232 (SGGVDSS) is an ATP binding site.

Homodimer.

It carries out the reaction XMP + L-glutamine + ATP + H2O = GMP + L-glutamate + AMP + diphosphate + 2 H(+). It functions in the pathway purine metabolism; GMP biosynthesis; GMP from XMP (L-Gln route): step 1/1. In terms of biological role, catalyzes the synthesis of GMP from XMP. The polypeptide is GMP synthase [glutamine-hydrolyzing] (Staphylococcus aureus (strain MSSA476)).